Consider the following 290-residue polypeptide: Phycobilisome 32.3 kDa linker polypeptide, phycocyanin-associated, rod (290 aa).

In terms of domain architecture, PBS-linker spans 1 to 179; that stretch reads MPVTVAASRL…LQRGYANSDR (179 aa). Residues 236 to 288 enclose the CpcD-like domain; it reads DQVVRVEVAALSTPRYPRIRRSSRVFFVPVSRLSQKLQEIQRMGGRVASISPA.

Belongs to the phycobilisome linker protein family.

The protein localises to the cellular thylakoid membrane. In terms of biological role, rod linker protein, associated with phycocyanin. Linker polypeptides determine the state of aggregation and the location of the disk-shaped phycobiliprotein units within the phycobilisome and modulate their spectroscopic properties in order to mediate a directed and optimal energy transfer. The protein is Phycobilisome 32.3 kDa linker polypeptide, phycocyanin-associated, rod (cpcC) of Picosynechococcus sp. (strain ATCC 27264 / PCC 7002 / PR-6) (Agmenellum quadruplicatum).